Here is a 134-residue protein sequence, read N- to C-terminus: Retinoid-binding protein 7 (134 aa).

Belongs to the calycin superfamily. Fatty-acid binding protein (FABP) family. In terms of tissue distribution, highly expressed in white adipose tissue and mammary gland.

Its subcellular location is the cytoplasm. Functionally, intracellular transport of retinol. This Mus musculus (Mouse) protein is Retinoid-binding protein 7 (Rbp7).